The chain runs to 145 residues: Superoxide dismutase [Mn/Fe] (145 aa).

Histidine 10 and histidine 64 together coordinate Fe(3+). The Mn(2+) site is built by histidine 10 and histidine 64.

It belongs to the iron/manganese superoxide dismutase family. Requires Mn(2+) as cofactor. Fe(3+) serves as cofactor.

It carries out the reaction 2 superoxide + 2 H(+) = H2O2 + O2. In terms of biological role, destroys superoxide anion radicals which are normally produced within the cells and which are toxic to biological systems. Catalyzes the dismutation of superoxide anion radicals into O2 and H2O2 by successive reduction and oxidation of the transition metal ion at the active site. The polypeptide is Superoxide dismutase [Mn/Fe] (sodA) (Streptococcus parasanguinis).